We begin with the raw amino-acid sequence, 161 residues long: Succinate dehydrogenase assembly factor 2, mitochondrial (161 aa).

The N-terminal 31 residues, 1 to 31 (MSLLRVTRSSGHLSAVCRLPARSISTTSILL), are a transit peptide targeting the mitochondrion.

Belongs to the SDHAF2 family. As to quaternary structure, interacts with the flavoprotein subunit within the SDH catalytic dimer.

It localises to the mitochondrion matrix. Plays an essential role in the assembly of succinate dehydrogenase (SDH), an enzyme complex (also referred to as respiratory complex II) that is a component of both the tricarboxylic acid (TCA) cycle and the mitochondrial electron transport chain, and which couples the oxidation of succinate to fumarate with the reduction of ubiquinone (coenzyme Q) to ubiquinol. Required for flavinylation (covalent attachment of FAD) of the flavoprotein subunit of the SDH catalytic dimer. This chain is Succinate dehydrogenase assembly factor 2, mitochondrial, found in Aedes aegypti (Yellowfever mosquito).